The chain runs to 159 residues: Serine-protein kinase RsbW (159 aa).

It belongs to the anti-sigma-factor family.

The catalysed reaction is L-seryl-[protein] + ATP = O-phospho-L-seryl-[protein] + ADP + H(+). It catalyses the reaction L-threonyl-[protein] + ATP = O-phospho-L-threonyl-[protein] + ADP + H(+). Its function is as follows. Negative regulator of sigma-B activity. Phosphorylates and inactivates its specific antagonist protein, RsbV. Upon phosphorylation of RsbV, RsbW is released and binds to sigma-B, thereby blocking its ability to form an RNA polymerase holoenzyme (E-sigma-B). The protein is Serine-protein kinase RsbW of Staphylococcus aureus (strain MSSA476).